Reading from the N-terminus, the 339-residue chain is Small ribosomal subunit biogenesis GTPase RsgA (339 aa).

The CP-type G domain maps to 111–271 (MRGLLKPVAA…LIDSPGIREF (161 aa)). Residues 159–162 (NKAD) and 213–221 (GQSGVGKSS) contribute to the GTP site. The Zn(2+) site is built by C295, C300, H302, and C308.

It belongs to the TRAFAC class YlqF/YawG GTPase family. RsgA subfamily. In terms of assembly, monomer. Associates with 30S ribosomal subunit, binds 16S rRNA. It depends on Zn(2+) as a cofactor.

Its subcellular location is the cytoplasm. In terms of biological role, one of several proteins that assist in the late maturation steps of the functional core of the 30S ribosomal subunit. Helps release RbfA from mature subunits. May play a role in the assembly of ribosomal proteins into the subunit. Circularly permuted GTPase that catalyzes slow GTP hydrolysis, GTPase activity is stimulated by the 30S ribosomal subunit. The chain is Small ribosomal subunit biogenesis GTPase RsgA from Pseudomonas aeruginosa (strain LESB58).